We begin with the raw amino-acid sequence, 330 residues long: Ferredoxin--NADP reductase 2 (330 aa).

7 residues coordinate FAD: Glu-37, Gln-45, Tyr-50, Val-90, Phe-124, Asp-286, and Thr-327.

The protein belongs to the ferredoxin--NADP reductase type 2 family. Homodimer. FAD is required as a cofactor.

The catalysed reaction is 2 reduced [2Fe-2S]-[ferredoxin] + NADP(+) + H(+) = 2 oxidized [2Fe-2S]-[ferredoxin] + NADPH. This chain is Ferredoxin--NADP reductase 2, found in Shouchella clausii (strain KSM-K16) (Alkalihalobacillus clausii).